The following is a 916-amino-acid chain: Protein translocase subunit SecA (916 aa).

ATP contacts are provided by residues Gln-87, 105-109, and Asp-512; that span reads GEGKT. The interval 857–916 is disordered; it reads QHAEAPSMEQAVAGEDEELPEGPAPVVPLEPVRNEQKIGRNEPCPCGSGKKYKHCHGQLD. Zn(2+)-binding residues include Cys-900, Cys-902, Cys-911, and His-912. The span at 906-916 shows a compositional bias: basic residues; sequence KKYKHCHGQLD.

Belongs to the SecA family. In terms of assembly, monomer and homodimer. Part of the essential Sec protein translocation apparatus which comprises SecA, SecYEG and auxiliary proteins SecDF-YajC and YidC. Zn(2+) is required as a cofactor.

The protein localises to the cell inner membrane. It localises to the cytoplasm. It catalyses the reaction ATP + H2O + cellular proteinSide 1 = ADP + phosphate + cellular proteinSide 2.. In terms of biological role, part of the Sec protein translocase complex. Interacts with the SecYEG preprotein conducting channel. Has a central role in coupling the hydrolysis of ATP to the transfer of proteins into and across the cell membrane, serving both as a receptor for the preprotein-SecB complex and as an ATP-driven molecular motor driving the stepwise translocation of polypeptide chains across the membrane. The polypeptide is Protein translocase subunit SecA (Pseudomonas paraeruginosa (strain DSM 24068 / PA7) (Pseudomonas aeruginosa (strain PA7))).